The chain runs to 375 residues: Succinyl-diaminopimelate desuccinylase (375 aa).

His-66 is a binding site for Zn(2+). Asp-68 is an active-site residue. A Zn(2+)-binding site is contributed by Asp-99. Glu-133 acts as the Proton acceptor in catalysis. Zn(2+) contacts are provided by Glu-134, Glu-162, and His-348.

It belongs to the peptidase M20A family. DapE subfamily. Homodimer. It depends on Zn(2+) as a cofactor. Co(2+) serves as cofactor.

The enzyme catalyses N-succinyl-(2S,6S)-2,6-diaminopimelate + H2O = (2S,6S)-2,6-diaminopimelate + succinate. It participates in amino-acid biosynthesis; L-lysine biosynthesis via DAP pathway; LL-2,6-diaminopimelate from (S)-tetrahydrodipicolinate (succinylase route): step 3/3. Functionally, catalyzes the hydrolysis of N-succinyl-L,L-diaminopimelic acid (SDAP), forming succinate and LL-2,6-diaminopimelate (DAP), an intermediate involved in the bacterial biosynthesis of lysine and meso-diaminopimelic acid, an essential component of bacterial cell walls. The chain is Succinyl-diaminopimelate desuccinylase from Yersinia enterocolitica serotype O:8 / biotype 1B (strain NCTC 13174 / 8081).